The following is a 75-amino-acid chain: Translational regulator CsrA (75 aa).

The protein belongs to the CsrA/RsmA family. Homodimer; the beta-strands of each monomer intercalate to form a hydrophobic core, while the alpha-helices form wings that extend away from the core.

It is found in the cytoplasm. Its function is as follows. A translational regulator that binds mRNA to regulate translation initiation and/or mRNA stability. Usually binds in the 5'-UTR at or near the Shine-Dalgarno sequence preventing ribosome-binding, thus repressing translation. Its main target seems to be the major flagellin gene, while its function is anatagonized by FliW. The polypeptide is Translational regulator CsrA (Exiguobacterium sibiricum (strain DSM 17290 / CCUG 55495 / CIP 109462 / JCM 13490 / 255-15)).